Here is a 146-residue protein sequence, read N- to C-terminus: Histone H2A.1 (146 aa).

Met-1 carries the N-acetylmethionine modification. The tract at residues 1-24 is disordered; sequence MDATKTTKGAGGRKGGPRKKSVTK. An SPKK motif motif is present at residues 142-145; it reads SPKK.

This sequence belongs to the histone H2A family. In terms of assembly, the nucleosome is a histone octamer containing two molecules each of H2A, H2B, H3 and H4 assembled in one H3-H4 heterotetramer and two H2A-H2B heterodimers. The octamer wraps approximately 147 bp of DNA. High expression in meristematic tissues, in cells of the root pericycle and in shoot cortical cells undergoing endoduplication of their DNA.

The protein resides in the nucleus. It is found in the chromosome. In terms of biological role, core component of nucleosome. Nucleosomes wrap and compact DNA into chromatin, limiting DNA accessibility to the cellular machineries which require DNA as a template. Histones thereby play a central role in transcription regulation, DNA repair, DNA replication and chromosomal stability. DNA accessibility is regulated via a complex set of post-translational modifications of histones, also called histone code, and nucleosome remodeling. The sequence is that of Histone H2A.1 from Solanum lycopersicum (Tomato).